The chain runs to 199 residues: Holliday junction branch migration complex subunit RuvA (199 aa).

The domain I stretch occupies residues 1–64 (MIALLTGKLA…EDAINLYGFR (64 aa)). The segment at 65 to 143 (TMEEKEMFQL…KLGHGPLQQD (79 aa)) is domain II. Residues 144 to 148 (VAPAD) are flexible linker. Positions 149–199 (AHNDMRDDVVSALVNLGYKEAVVQKTVDEIGVAADATVESLLKQALKKLMK) are domain III.

Belongs to the RuvA family. As to quaternary structure, homotetramer. Forms an RuvA(8)-RuvB(12)-Holliday junction (HJ) complex. HJ DNA is sandwiched between 2 RuvA tetramers; dsDNA enters through RuvA and exits via RuvB. An RuvB hexamer assembles on each DNA strand where it exits the tetramer. Each RuvB hexamer is contacted by two RuvA subunits (via domain III) on 2 adjacent RuvB subunits; this complex drives branch migration. In the full resolvosome a probable DNA-RuvA(4)-RuvB(12)-RuvC(2) complex forms which resolves the HJ.

The protein localises to the cytoplasm. Functionally, the RuvA-RuvB-RuvC complex processes Holliday junction (HJ) DNA during genetic recombination and DNA repair, while the RuvA-RuvB complex plays an important role in the rescue of blocked DNA replication forks via replication fork reversal (RFR). RuvA specifically binds to HJ cruciform DNA, conferring on it an open structure. The RuvB hexamer acts as an ATP-dependent pump, pulling dsDNA into and through the RuvAB complex. HJ branch migration allows RuvC to scan DNA until it finds its consensus sequence, where it cleaves and resolves the cruciform DNA. The chain is Holliday junction branch migration complex subunit RuvA from Geotalea daltonii (strain DSM 22248 / JCM 15807 / FRC-32) (Geobacter daltonii).